A 504-amino-acid chain; its full sequence is Serine O-succinyltransferase (504 aa).

The transit peptide at 1–26 directs the protein to the mitochondrion; the sequence is MLRASSKRLQLSWQVFRRFQSSNPQL. The disordered stretch occupies residues 49–70; it reads QACPNSVDPSASITSPSLSSGP. Residues 57 to 70 show a composition bias toward low complexity; the sequence is PSASITSPSLSSGP. Positions 117-395 constitute an AB hydrolase-1 domain; that stretch reads NAILLHTGLS…SAEEIIKLNE (279 aa). The interval 124–127 is important for substrate specificity; the sequence is GLSA. Residue Ser221 is the Nucleophile of the active site. Position 290 (Arg290) interacts with substrate. Residues Asp443 and His480 contribute to the active site. Residue Asp481 participates in substrate binding.

This sequence belongs to the AB hydrolase superfamily. MetX family.

The protein resides in the mitochondrion. The enzyme catalyses succinyl-CoA + L-serine = O-succinyl-L-serine + CoA. Its pathway is amino-acid biosynthesis; L-cysteine biosynthesis; L-cysteine from L-serine: step 1/2. Functionally, transfers a succinyl group from succinyl-CoA to L-serine, forming succinyl-L-serine. Also has weak serine acetyl transferase activity and homoserine succinyl transferase activity. This Schizosaccharomyces pombe (strain 972 / ATCC 24843) (Fission yeast) protein is Serine O-succinyltransferase.